The sequence spans 359 residues: Mitochondrial glutathione transporter SLC25A39 (359 aa).

The Mitochondrial intermembrane portion of the chain corresponds to 1-14; that stretch reads MDDQDPGGISPLQQ. Solcar repeat units follow at residues 9–151, 159–243, and 253–347; these read ISPL…LKAF, SDLY…VKSW, and TSVG…GKSF. The helical transmembrane segment at 15 to 35 threads the bilayer; sequence MVASGAGAVVTSLFMTPLDVV. Over 36–121 the chain is Mitochondrial matrix; sequence KVRLQSQRPS…VKIVRHEGTR (86 aa). [2Fe-2S] cluster-binding residues include cysteine 74, cysteine 78, cysteine 88, and cysteine 94. A helical transmembrane segment spans residues 122 to 142; it reads TLWSGLPATLVMTVPATAIYF. The Mitochondrial intermembrane segment spans residues 143–164; that stretch reads TAYDQLKAFLCGQSLTSDLYAP. Residues 165 to 185 traverse the membrane as a helical segment; sequence MVAGALARMGTVTVVSPLELV. The Mitochondrial matrix portion of the chain corresponds to 186–214; it reads RTKLQAQHVSYRELASSVQAAVTQGGWRS. Residues 215-235 form a helical membrane-spanning segment; sequence LWLGWGPTALRDVPFSALYWF. Residues 236-255 are Mitochondrial intermembrane-facing; that stretch reads NYELVKSWLSGLRPKDQTSV. A helical transmembrane segment spans residues 256–276; it reads GISFVAGGISGMVAATLTLPF. The Mitochondrial matrix portion of the chain corresponds to 277 to 317; sequence DVVKTQRQMSLGAVEAVRVKPPRVDSTWLLLRRIRAESGTR. Residues 318–338 form a helical membrane-spanning segment; the sequence is GLFAGFLPRIIKAAPSCAIMI. Topologically, residues 339 to 359 are mitochondrial intermembrane; sequence STYEFGKSFFQRLNQEQPLGR.

It belongs to the mitochondrial carrier (TC 2.A.29) family. Cleaved and degraded by AFG3L2; degradation by AFG3L2 is regulated by the ability of SLC25A39 to bind iron-sulfur. In absence of mitochondrial glutathione, SLC25A39 binds iron-sulfur, preventing cleavage and degradation by AFG3L2. The presence of mitochondrial glutathione prevents iron-sulfur-binding to SLC25A39, promoting cleavage and degradation by AFG3L2. Abundant expression in bone marrow, spleen, testis and kidney.

The protein resides in the mitochondrion inner membrane. It carries out the reaction glutathione(in) = glutathione(out). With respect to regulation, the activity of SLC25A39 is regulated by levels of mitochondrial glutathione via its ability to bind [2Fe-2S] iron-sulfur cluster. Upon physiological levels of mitochondrial glutathione, glutathione prevents iron-sulfur-binding to SLC25A39 promoting cleavage and degradation by AFG3L2. Upon depletion of mitochondrial glutathione, SLC25A39 binds iron-sulfur, preventing cleavage and degradation by AFG3L2. Functionally, mitochondrial transporter required for glutathione import into mitochondria. Glutathione, which plays key roles in oxidative metabolism, is produced exclusively in the cytosol and is imported in many organelles. Mitochondrial glutathione is required for the activity and stability of proteins containing iron-sulfur clusters, as well as erythropoiesis. In Mus musculus (Mouse), this protein is Mitochondrial glutathione transporter SLC25A39.